The primary structure comprises 239 residues: Tumor protein p53-inducible nuclear protein 1 (239 aa).

An LIR motif is present at residues 25 to 37 (EKEDDEWILVDFI).

In terms of assembly, interacts with p53/TP53 and HIPK2. Interacts with PRKCG, GABARAP, GABARAPL1, GABARAPL2, MAP1LC3A, MAP1LC3B and MAP1LC3C. As to expression, ubiquitously expressed with highest levels in the thymus.

It is found in the cytoplasm. The protein resides in the cytosol. It localises to the nucleus. The protein localises to the PML body. Its subcellular location is the cytoplasmic vesicle. It is found in the autophagosome. Its function is as follows. Antiproliferative and proapoptotic protein involved in cell stress response which acts as a dual regulator of transcription and autophagy. Acts as a positive regulator of autophagy. In response to cellular stress or activation of autophagy, relocates to autophagosomes where it interacts with autophagosome-associated proteins GABARAP, GABARAPL1/L2, MAP1LC3A/B/C and regulates autophagy. Acts as an antioxidant and plays a major role in p53/TP53-driven oxidative stress response. Possesses both a p53/TP53-independent intracellular reactive oxygen species (ROS) regulatory function and a p53/TP53-dependent transcription regulatory function. Positively regulates p53/TP53 and p73/TP73 and stimulates their capacity to induce apoptosis and regulate cell cycle. In response to double-strand DNA breaks, promotes p53/TP53 phosphorylation on 'Ser-46' and subsequent apoptosis. Acts as a tumor suppressor by inducing cell death by an autophagy and caspase-dependent mechanism. Can reduce cell migration by regulating the expression of SPARC. The sequence is that of Tumor protein p53-inducible nuclear protein 1 (Trp53inp1) from Mus musculus (Mouse).